The sequence spans 509 residues: Steroid 17-alpha-hydroxylase/17,20 lyase (509 aa).

C440 is a binding site for heme.

This sequence belongs to the cytochrome P450 family. The cofactor is heme.

It is found in the endoplasmic reticulum membrane. The protein resides in the microsome membrane. It catalyses the reaction a C21-steroid + reduced [NADPH--hemoprotein reductase] + O2 = a 17alpha-hydroxy-C21-steroid + oxidized [NADPH--hemoprotein reductase] + H2O + H(+). The catalysed reaction is progesterone + reduced [NADPH--hemoprotein reductase] + O2 = 17alpha-hydroxyprogesterone + oxidized [NADPH--hemoprotein reductase] + H2O + H(+). It carries out the reaction pregnenolone + reduced [NADPH--hemoprotein reductase] + O2 = 17alpha-hydroxypregnenolone + oxidized [NADPH--hemoprotein reductase] + H2O + H(+). The enzyme catalyses 17alpha-hydroxyprogesterone + reduced [NADPH--hemoprotein reductase] + O2 = androst-4-ene-3,17-dione + acetate + oxidized [NADPH--hemoprotein reductase] + H2O + 2 H(+). It catalyses the reaction 17alpha-hydroxyprogesterone + reduced [NADPH--hemoprotein reductase] + O2 = 16alpha,17alpha-dihydroxyprogesterone + oxidized [NADPH--hemoprotein reductase] + H2O + H(+). The catalysed reaction is 16alpha,17alpha-dihydroxyprogesterone + reduced [NADPH--hemoprotein reductase] + O2 = 6beta,16alpha,17alpha-trihydroxyprogesterone + oxidized [NADPH--hemoprotein reductase] + H2O + H(+). It carries out the reaction 17alpha-hydroxypregnenolone + reduced [NADPH--hemoprotein reductase] + O2 = 3beta-hydroxyandrost-5-en-17-one + acetate + oxidized [NADPH--hemoprotein reductase] + H2O + 2 H(+). The enzyme catalyses 16alpha,17alpha-dihydroxypregnenolone + reduced [NADPH--hemoprotein reductase] + O2 = 3beta,16alpha-dihydroxy-androst-5-en-17-one + acetate + oxidized [NADPH--hemoprotein reductase] + H2O + 2 H(+). It catalyses the reaction 3beta-hydroxyandrost-5-en-17-one + reduced [NADPH--hemoprotein reductase] + O2 = 3beta,16alpha-dihydroxy-androst-5-en-17-one + oxidized [NADPH--hemoprotein reductase] + H2O + H(+). The catalysed reaction is androst-4-ene-3,17-dione + reduced [NADPH--hemoprotein reductase] + O2 = 16alpha-hydroxyandrost-4-ene-3,17-dione + oxidized [NADPH--hemoprotein reductase] + H2O + H(+). It functions in the pathway steroid hormone biosynthesis. Its pathway is steroid biosynthesis; glucocorticoid biosynthesis. Its activity is regulated as follows. Regulated predominantly by intracellular cAMP levels. The 17,20-lyase activity is stimulated by cytochrome b5, which acts as an allosteric effector increasing the Vmax of the lyase activity. Its function is as follows. A cytochrome P450 monooxygenase involved in corticoid and androgen biosynthesis. Catalyzes 17-alpha hydroxylation of C21 steroids, which is common for both pathways. A second oxidative step, required only for androgen synthesis, involves an acyl-carbon cleavage. The 17-alpha hydroxy intermediates, as part of adrenal glucocorticoids biosynthesis pathway, are precursors of cortisol. Hydroxylates steroid hormones, pregnenolone and progesterone to form 17-alpha hydroxy metabolites, followed by the cleavage of the C17-C20 bond to form C19 steroids, dehydroepiandrosterone (DHEA) and androstenedione. Has 16-alpha hydroxylase activity. Catalyzes 16-alpha hydroxylation of 17-alpha hydroxy pregnenolone, followed by the cleavage of the C17-C20 bond to form 16-alpha-hydroxy DHEA. Also 16-alpha hydroxylates androgens, relevant for estriol synthesis. Mechanistically, uses molecular oxygen inserting one oxygen atom into a substrate, and reducing the second into a water molecule, with two electrons provided by NADPH via cytochrome P450 reductase (CPR; NADPH-ferrihemoprotein reductase). In Peromyscus leucopus (White-footed mouse), this protein is Steroid 17-alpha-hydroxylase/17,20 lyase (Cyp17a1).